The following is a 442-amino-acid chain: Histidine--tRNA ligase (442 aa).

This sequence belongs to the class-II aminoacyl-tRNA synthetase family. As to quaternary structure, homodimer.

The protein localises to the cytoplasm. It catalyses the reaction tRNA(His) + L-histidine + ATP = L-histidyl-tRNA(His) + AMP + diphosphate + H(+). The chain is Histidine--tRNA ligase from Helicobacter hepaticus (strain ATCC 51449 / 3B1).